The primary structure comprises 327 residues: Methionyl-tRNA formyltransferase (327 aa).

117–120 serves as a coordination point for (6S)-5,6,7,8-tetrahydrofolate; sequence SLLP.

Belongs to the Fmt family.

It carries out the reaction L-methionyl-tRNA(fMet) + (6R)-10-formyltetrahydrofolate = N-formyl-L-methionyl-tRNA(fMet) + (6S)-5,6,7,8-tetrahydrofolate + H(+). Functionally, attaches a formyl group to the free amino group of methionyl-tRNA(fMet). The formyl group appears to play a dual role in the initiator identity of N-formylmethionyl-tRNA by promoting its recognition by IF2 and preventing the misappropriation of this tRNA by the elongation apparatus. This Delftia acidovorans (strain DSM 14801 / SPH-1) protein is Methionyl-tRNA formyltransferase.